The primary structure comprises 254 residues: Pyruvate dehydrogenase complex repressor (254 aa).

An HTH gntR-type domain is found at 9–77 (PKLSDVIEQQ…QGGGTFVQSS (69 aa)). Residues 37 to 56 (ERELAKQFDVSRPSLREAIQ) constitute a DNA-binding region (H-T-H motif).

In terms of biological role, transcriptional repressor for the pyruvate dehydrogenase complex genes aceEF and lpd. This is Pyruvate dehydrogenase complex repressor (pdhR) from Salmonella typhi.